The following is a 304-amino-acid chain: Acetylglutamate kinase (304 aa).

Substrate contacts are provided by residues 72–73 (GG), R94, and N199.

The protein belongs to the acetylglutamate kinase family. ArgB subfamily.

Its subcellular location is the cytoplasm. It catalyses the reaction N-acetyl-L-glutamate + ATP = N-acetyl-L-glutamyl 5-phosphate + ADP. It participates in amino-acid biosynthesis; L-arginine biosynthesis; N(2)-acetyl-L-ornithine from L-glutamate: step 2/4. Its function is as follows. Catalyzes the ATP-dependent phosphorylation of N-acetyl-L-glutamate. The polypeptide is Acetylglutamate kinase (Methylobacterium nodulans (strain LMG 21967 / CNCM I-2342 / ORS 2060)).